Reading from the N-terminus, the 135-residue chain is Nucleoside diphosphate kinase (135 aa).

The ATP site is built by K9, F57, R85, T91, R102, and N112. Catalysis depends on H115, which acts as the Pros-phosphohistidine intermediate.

Belongs to the NDK family. As to quaternary structure, homotetramer. The cofactor is Mg(2+).

It is found in the cytoplasm. The catalysed reaction is a 2'-deoxyribonucleoside 5'-diphosphate + ATP = a 2'-deoxyribonucleoside 5'-triphosphate + ADP. It catalyses the reaction a ribonucleoside 5'-diphosphate + ATP = a ribonucleoside 5'-triphosphate + ADP. Major role in the synthesis of nucleoside triphosphates other than ATP. The ATP gamma phosphate is transferred to the NDP beta phosphate via a ping-pong mechanism, using a phosphorylated active-site intermediate. This is Nucleoside diphosphate kinase from Thermobifida fusca (strain YX).